Reading from the N-terminus, the 351-residue chain is UDP-3-O-acylglucosamine N-acyltransferase (351 aa).

His240 (proton acceptor) is an active-site residue.

It belongs to the transferase hexapeptide repeat family. LpxD subfamily. As to quaternary structure, homotrimer.

The enzyme catalyses a UDP-3-O-[(3R)-3-hydroxyacyl]-alpha-D-glucosamine + a (3R)-hydroxyacyl-[ACP] = a UDP-2-N,3-O-bis[(3R)-3-hydroxyacyl]-alpha-D-glucosamine + holo-[ACP] + H(+). It functions in the pathway bacterial outer membrane biogenesis; LPS lipid A biosynthesis. Its function is as follows. Catalyzes the N-acylation of UDP-3-O-acylglucosamine using 3-hydroxyacyl-ACP as the acyl donor. Is involved in the biosynthesis of lipid A, a phosphorylated glycolipid that anchors the lipopolysaccharide to the outer membrane of the cell. This is UDP-3-O-acylglucosamine N-acyltransferase from Methylacidiphilum infernorum (isolate V4) (Methylokorus infernorum (strain V4)).